Here is a 58-residue protein sequence, read N- to C-terminus: uncharacterized protein (58 aa).

The chain crosses the membrane as a helical span at residues 24 to 44 (LSVYLGLATTIVCIVLFFTML).

Its subcellular location is the membrane. This is an uncharacterized protein from Haemophilus influenzae (strain ATCC 51907 / DSM 11121 / KW20 / Rd).